The sequence spans 182 residues: Transcription termination/antitermination protein NusG (182 aa).

Positions 130-161 constitute a KOW domain; the sequence is VGEVVRVNEGPFADFNGTVEEVDYEKSRLKVS.

The protein belongs to the NusG family.

Functionally, participates in transcription elongation, termination and antitermination. This is Transcription termination/antitermination protein NusG from Vibrio vulnificus (strain CMCP6).